Consider the following 209-residue polypeptide: FMN-dependent NADH:quinone oxidoreductase 2 (209 aa).

FMN is bound by residues Ser9, 15-17 (SVS), and 97-100 (MWNF).

The protein belongs to the azoreductase type 1 family. Homodimer. The cofactor is FMN.

The catalysed reaction is 2 a quinone + NADH + H(+) = 2 a 1,4-benzosemiquinone + NAD(+). The enzyme catalyses N,N-dimethyl-1,4-phenylenediamine + anthranilate + 2 NAD(+) = 2-(4-dimethylaminophenyl)diazenylbenzoate + 2 NADH + 2 H(+). Functionally, quinone reductase that provides resistance to thiol-specific stress caused by electrophilic quinones. Also exhibits azoreductase activity. Catalyzes the reductive cleavage of the azo bond in aromatic azo compounds to the corresponding amines. This chain is FMN-dependent NADH:quinone oxidoreductase 2, found in Pseudomonas syringae pv. tomato (strain ATCC BAA-871 / DC3000).